We begin with the raw amino-acid sequence, 129 residues long: UPF0344 protein MW0851 (129 aa).

A run of 4 helical transmembrane segments spans residues 1-21, 36-56, 67-87, and 99-119; these read MLHL…ATYL, LHMI…WILI, MLLT…EVSI, and MFWI…ILPL.

This sequence belongs to the UPF0344 family.

It is found in the cell membrane. In Staphylococcus aureus (strain MW2), this protein is UPF0344 protein MW0851.